The following is an 877-amino-acid chain: Telomere length regulation protein clk-2 (877 aa).

Residues 488–501 (NKDSAAITSKNNLR) show a composition bias toward polar residues. The disordered stretch occupies residues 488 to 509 (NKDSAAITSKNNLRLDSDDDED).

Belongs to the TEL2 family.

The protein resides in the nucleus. It is found in the chromosome. Its subcellular location is the telomere. Functionally, DNA damage checkpoint protein required for DNA damage-induced cell cycle arrest and apoptosis, thereby playing a role in genome stability. Regulator of telomere length. This chain is Telomere length regulation protein clk-2 (clk-2), found in Caenorhabditis elegans.